The sequence spans 477 residues: Aspartyl/glutamyl-tRNA(Asn/Gln) amidotransferase subunit B (477 aa).

It belongs to the GatB/GatE family. GatB subfamily. As to quaternary structure, heterotrimer of A, B and C subunits.

The catalysed reaction is L-glutamyl-tRNA(Gln) + L-glutamine + ATP + H2O = L-glutaminyl-tRNA(Gln) + L-glutamate + ADP + phosphate + H(+). The enzyme catalyses L-aspartyl-tRNA(Asn) + L-glutamine + ATP + H2O = L-asparaginyl-tRNA(Asn) + L-glutamate + ADP + phosphate + 2 H(+). Its function is as follows. Allows the formation of correctly charged Asn-tRNA(Asn) or Gln-tRNA(Gln) through the transamidation of misacylated Asp-tRNA(Asn) or Glu-tRNA(Gln) in organisms which lack either or both of asparaginyl-tRNA or glutaminyl-tRNA synthetases. The reaction takes place in the presence of glutamine and ATP through an activated phospho-Asp-tRNA(Asn) or phospho-Glu-tRNA(Gln). The protein is Aspartyl/glutamyl-tRNA(Asn/Gln) amidotransferase subunit B of Streptococcus sanguinis (strain SK36).